Here is a 514-residue protein sequence, read N- to C-terminus: Beta-secretase 2 (514 aa).

The first 19 residues, 1 to 19 (MGALLRALLLLVLAQWLLS), serve as a signal peptide directing secretion. The propeptide occupies 20–62 (AVPALAPAPFTLPLQVAGATNHRASAVPGLGTPELPRADGLAL). Over 20 to 469 (AVPALAPAPF…NEPILWIVSY (450 aa)) the chain is Extracellular. The Peptidase A1 domain occupies 88-425 (YYLEMLIGTP…DRAQRRVGFA (338 aa)). Residue Asp106 is part of the active site. The N-linked (GlcNAc...) asparagine glycan is linked to Asn166. 3 cysteine pairs are disulfide-bonded: Cys229–Cys429, Cys288–Cys453, and Cys340–Cys389. Asp299 is an active-site residue. N-linked (GlcNAc...) asparagine glycosylation occurs at Asn362. Residues 470 to 490 (ALMSVCGAILLVLILLLLLPL) form a helical membrane-spanning segment. Residues 491–514 (HCRHAPRDPEVVNDESSLVRHRWK) lie on the Cytoplasmic side of the membrane.

Belongs to the peptidase A1 family. Monomer. Interacts with RTN3 and RTN4. Undergoes autoproteolytic cleavage. In terms of processing, glycosylated. High expression in pancreatic islets. Expressed at much lower levels in the pituitary, colon, and ovaries and is nearly absent from all the other tissues.

Its subcellular location is the cell membrane. It localises to the golgi apparatus. The protein resides in the endoplasmic reticulum. The protein localises to the endosome. It is found in the melanosome. It catalyses the reaction Broad endopeptidase specificity. Cleaves Glu-Val-Asn-Leu-|-Asp-Ala-Glu-Phe in the Swedish variant of Alzheimer's amyloid precursor protein.. Responsible for the proteolytic processing of the amyloid precursor protein (APP). Cleaves APP, between residues 690 and 691, leading to the generation and extracellular release of beta-cleaved soluble APP, and a corresponding cell-associated C-terminal fragment which is later released by gamma-secretase. It has also been shown that it can cleave APP between residues 671 and 672. Involved in the proteolytic shedding of PMEL at early stages of melanosome biogenesis. Cleaves PMEL within the M-beta fragment to release the amyloidogenic PMEL luminal fragment containing M-alpha and a small portion of M-beta N-terminus. This is a prerequisite step for subsequent processing and assembly of PMEL fibrils into amyloid sheets. Responsible also for the proteolytic processing of CLTRN in pancreatic beta cells. The chain is Beta-secretase 2 (Bace2) from Mus musculus (Mouse).